The sequence spans 319 residues: Myoblast determination protein 1 (319 aa).

Residue M1 forms a Peptide (Met-Gly) (interchain with G-Cter in ubiquitin) linkage. N6-methyllysine; by EHMT2 is present on K104. Positions 109-160 (DRRKAATMRERRRLSKVNEAFETLKRCTSSNPNQRLPKVEILRNAIRYIEGL) constitute a bHLH domain. Disordered stretches follow at residues 174-222 (AAAA…GARR) and 267-319 (PALL…YQVL). Over residues 197 to 207 (SDASSPRSNCS) the composition is skewed to polar residues. The segment covering 267 to 276 (PALLLADAPP) has biased composition (low complexity).

As to quaternary structure, efficient DNA binding requires dimerization with another bHLH protein. Seems to form active heterodimers with ITF-2. Interacts with SUV39H1. Interacts with DDX5. Interacts with CHD2. Interacts with TSC22D3. Interacts with SETD3. Interacts with P-TEFB complex; promotes the transcriptional activity of MYOD1 through its CDK9-mediated phosphorylation. Interacts with CSRP3. Interacts with NUPR1. Post-translationally, phosphorylated by CDK9. This phosphorylation promotes its function in muscle differentiation. In terms of processing, acetylated by a complex containing EP300 and PCAF. The acetylation is essential to activate target genes. Conversely, its deacetylation by SIRT1 inhibits its function. Ubiquitinated on the N-terminus; which is required for proteasomal degradation. Post-translationally, methylation at Lys-104 by EHMT2/G9a inhibits myogenic activity.

Its subcellular location is the nucleus. Acts as a transcriptional activator that promotes transcription of muscle-specific target genes and plays a role in muscle differentiation. Together with MYF5 and MYOG, co-occupies muscle-specific gene promoter core region during myogenesis. Induces fibroblasts to differentiate into myoblasts. Interacts with and is inhibited by the twist protein. This interaction probably involves the basic domains of both proteins. This chain is Myoblast determination protein 1 (MYOD1), found in Ovis aries (Sheep).